The primary structure comprises 48 residues: Large ribosomal subunit protein bL34 (48 aa).

This sequence belongs to the bacterial ribosomal protein bL34 family.

The chain is Large ribosomal subunit protein bL34 from Gloeothece citriformis (strain PCC 7424) (Cyanothece sp. (strain PCC 7424)).